A 1978-amino-acid polypeptide reads, in one-letter code: Dedicator of cytokinesis protein 4 (1978 aa).

The SH3 domain maps to glutamate 6–alanine 67. Residue tyrosine 167 is modified to Phosphotyrosine. At threonine 193 the chain carries Phosphothreonine. Positions arginine 401–cysteine 574 constitute a C2 DOCK-type domain. The region spanning lysine 1199–isoleucine 1605 is the DOCKER domain. Serine 1608, serine 1616, serine 1623, serine 1627, serine 1629, and serine 1640 each carry phosphoserine. 2 disordered regions span residues serine 1657–threonine 1738 and isoleucine 1751–leucine 1978. The span at proline 1681–leucine 1712 shows a compositional bias: low complexity. Serine 1778 carries the phosphoserine modification. Positions proline 1797 to proline 1803 match the SH3-binding motif. The segment covering threonine 1804 to proline 1818 has biased composition (polar residues). Over residues serine 1842–serine 1872 the composition is skewed to low complexity. The segment covering glycine 1873 to serine 1882 has biased composition (polar residues). Pro residues predominate over residues valine 1885–valine 1895. Over residues serine 1953–proline 1966 the composition is skewed to basic and acidic residues.

Belongs to the DOCK family. In terms of assembly, interacts with nucleotide-free Rap1; functions as a guanine nucleotide exchange factor (GEF) for Rap1. Interacts (via DOCKER domain) with RAC1; functions as a guanine nucleotide exchange factor (GEF) for RAC1. Interacts with the SH3 domain of CRK. Interacts with FASLG. Interacts with ELMO2 and EPHA2; mediates activation of RAC1 by EPHA2. Interacts with USH1C (via PDZ 1 domain). As to expression, expressed in inner ear (at protein level).

The protein resides in the cell membrane. It is found in the cytoplasm. It localises to the cytosol. Functionally, functions as a guanine nucleotide exchange factor (GEF) that promotes the exchange of GDP to GTP, converting inactive GDP-bound small GTPases into their active GTP-bound form. Involved in regulation of adherens junction between cells. Plays a role in cell migration. Has a higher guanine nucleotide exchange factor activity compared to other isoforms. The sequence is that of Dedicator of cytokinesis protein 4 (Dock4) from Mus musculus (Mouse).